Here is a 170-residue protein sequence, read N- to C-terminus: 6,7-dimethyl-8-ribityllumazine synthase (170 aa).

5-amino-6-(D-ribitylamino)uracil-binding positions include tryptophan 25, alanine 57–glutamate 59, and alanine 79–isoleucine 81. Residue aspartate 84–threonine 85 coordinates (2S)-2-hydroxy-3-oxobutyl phosphate. Histidine 87 functions as the Proton donor in the catalytic mechanism. 5-amino-6-(D-ribitylamino)uracil is bound at residue asparagine 112. Arginine 126 contributes to the (2S)-2-hydroxy-3-oxobutyl phosphate binding site.

The protein belongs to the DMRL synthase family.

The catalysed reaction is (2S)-2-hydroxy-3-oxobutyl phosphate + 5-amino-6-(D-ribitylamino)uracil = 6,7-dimethyl-8-(1-D-ribityl)lumazine + phosphate + 2 H2O + H(+). It participates in cofactor biosynthesis; riboflavin biosynthesis; riboflavin from 2-hydroxy-3-oxobutyl phosphate and 5-amino-6-(D-ribitylamino)uracil: step 1/2. Its function is as follows. Catalyzes the formation of 6,7-dimethyl-8-ribityllumazine by condensation of 5-amino-6-(D-ribitylamino)uracil with 3,4-dihydroxy-2-butanone 4-phosphate. This is the penultimate step in the biosynthesis of riboflavin. In Thermobifida fusca (strain YX), this protein is 6,7-dimethyl-8-ribityllumazine synthase.